A 161-amino-acid chain; its full sequence is Anaerobic nitrite reductase Hb2 (161 aa).

Residues 8–157 enclose the Globin domain; the sequence is GFSEEQEALV…LVDAIKSEMK (150 aa). A Homodimerization motif is present at residues 41 to 45; the sequence is EIAPS. Heme b-binding residues include Ser51, Lys65, His69, Lys99, Thr103, and His104. The Homodimerization motif lies at 111 to 123; the sequence is NEHFEVTKFALLE.

The protein belongs to the plant globin family. Homodimer. Requires heme b as cofactor. Predominantly expressed in roots, cotyledons, stems and nodules (confined to some cells associated with the nitrogen-fixing Bradyrhizobium symbiont), and, to a lower extent, in flowers, young leaves, pods and seeds.

It localises to the cytoplasm. The protein localises to the nucleus. The catalysed reaction is Fe(III)-heme b-[protein] + nitric oxide + H2O = Fe(II)-heme b-[protein] + nitrite + 2 H(+). Functionally, phytoglobin that reduces nitrite to nitric oxide (NO) under anoxic conditions (e.g. during flooding or in waterlogged soil) and upon root nodulation. Required for general plant development and during nodulation, especially for the onset of symbiosis. Monitors nitric oxide (NO) levels during early phase of the nitrogen-fixing symbiosis and buffers oxygen in functioning nodules. May not function as an oxygen storage or transport protein. Has an unusually high affinity for O(2) through a hexacoordinate heme iron because of a very low dissociation constant. Involved in water stress tolerance. The sequence is that of Anaerobic nitrite reductase Hb2 from Glycine max (Soybean).